Here is a 125-residue protein sequence, read N- to C-terminus: Calcitonin receptor-stimulating peptide 3 (125 aa).

The first 25 residues, 1-25, serve as a signal peptide directing secretion; it reads MGFWKFPPFLILSILVLYQAGMLHA. Positions 26 to 79 are excised as a propeptide; that stretch reads APFRMALGSSFDSATLTEEEMSLLLVAMVKDYVQMKATVLEQETEDFSITTQER. An intrachain disulfide couples Cys81 to Cys86. A Leucine amide modification is found at Leu116. The propeptide occupies 122–125; the sequence is QPQA.

The protein belongs to the calcitonin family. Mainly expressed in the thyroid gland and CNS. Found in the nerve cells of cerebrum, hippocampus, hypothalamus, pons/midbrain and thalamus.

It is found in the secreted. The polypeptide is Calcitonin receptor-stimulating peptide 3 (CRSP3) (Sus scrofa (Pig)).